We begin with the raw amino-acid sequence, 486 residues long: Malonate-semialdehyde dehydrogenase 1 (486 aa).

5 residues coordinate NAD(+): Phe-154, Lys-178, Glu-181, Arg-182, and Ser-231. Cys-286 (nucleophile) is an active-site residue. Glu-386 is an NAD(+) binding site.

Belongs to the aldehyde dehydrogenase family. IolA subfamily. As to quaternary structure, homotetramer.

It catalyses the reaction 3-oxopropanoate + NAD(+) + CoA + H2O = hydrogencarbonate + acetyl-CoA + NADH + H(+). The catalysed reaction is 2-methyl-3-oxopropanoate + NAD(+) + CoA + H2O = propanoyl-CoA + hydrogencarbonate + NADH + H(+). The protein operates within polyol metabolism; myo-inositol degradation into acetyl-CoA; acetyl-CoA from myo-inositol: step 7/7. Its function is as follows. Catalyzes the oxidation of malonate semialdehyde (MSA) and methylmalonate semialdehyde (MMSA) into acetyl-CoA and propanoyl-CoA, respectively. Is involved in a myo-inositol catabolic pathway. Bicarbonate, and not CO2, is the end-product of the enzymatic reaction. The polypeptide is Malonate-semialdehyde dehydrogenase 1 (Oceanobacillus iheyensis (strain DSM 14371 / CIP 107618 / JCM 11309 / KCTC 3954 / HTE831)).